We begin with the raw amino-acid sequence, 441 residues long: Protein eva-1 homolog C (441 aa).

Positions 1-23 are disordered; the sequence is MLLPGPARQPPTPQPVQHPGLRR. A signal peptide spans 1 to 48; sequence MLLPGPARQPPTPQPVQHPGLRRQVEPPGQLLRLFYCTVLVCSKEISA. The span at 7–16 shows a compositional bias: pro residues; sequence ARQPPTPQPV. Topologically, residues 49 to 322 are extracellular; it reads LTDFSGYLTK…AYIRAHPERA (274 aa). Residue N62 is glycosylated (N-linked (GlcNAc...) asparagine). The SUEL-type lectin 1 domain occupies 67-159; that stretch reads ACDGDYLNLQ…KYLLVSFKCQ (93 aa). N165 is a glycosylation site (N-linked (GlcNAc...) asparagine). Positions 168–260 constitute an SUEL-type lectin 2 domain; that stretch reads VCEDQELKLH…KYLTVTYACV (93 aa). A helical transmembrane segment spans residues 323 to 343; the sequence is ALLFVSSVCIGLALTLCALVI. The Cytoplasmic segment spans residues 344 to 441; it reads RESCAKDFRD…SLPRNMGQFY (98 aa). The segment at 362–391 is disordered; sequence VPGSDKVEEDSEDEEEEEDSSESDFPGELS. Acidic residues predominate over residues 368-383; that stretch reads VEEDSEDEEEEEDSSE.

It belongs to the EVA1 family.

It is found in the cell membrane. Binds heparin. This Pan troglodytes (Chimpanzee) protein is Protein eva-1 homolog C (EVA1C).